The primary structure comprises 260 residues: Indole-3-glycerol phosphate synthase (260 aa).

The protein belongs to the TrpC family.

The catalysed reaction is 1-(2-carboxyphenylamino)-1-deoxy-D-ribulose 5-phosphate + H(+) = (1S,2R)-1-C-(indol-3-yl)glycerol 3-phosphate + CO2 + H2O. The protein operates within amino-acid biosynthesis; L-tryptophan biosynthesis; L-tryptophan from chorismate: step 4/5. The polypeptide is Indole-3-glycerol phosphate synthase (Neisseria meningitidis serogroup B (strain ATCC BAA-335 / MC58)).